A 473-amino-acid polypeptide reads, in one-letter code: 3-isopropylmalate dehydratase large subunit (473 aa).

Residues cysteine 349, cysteine 409, and cysteine 412 each coordinate [4Fe-4S] cluster.

It belongs to the aconitase/IPM isomerase family. LeuC type 1 subfamily. Heterodimer of LeuC and LeuD. [4Fe-4S] cluster serves as cofactor.

The catalysed reaction is (2R,3S)-3-isopropylmalate = (2S)-2-isopropylmalate. It participates in amino-acid biosynthesis; L-leucine biosynthesis; L-leucine from 3-methyl-2-oxobutanoate: step 2/4. Catalyzes the isomerization between 2-isopropylmalate and 3-isopropylmalate, via the formation of 2-isopropylmaleate. The chain is 3-isopropylmalate dehydratase large subunit from Gloeobacter violaceus (strain ATCC 29082 / PCC 7421).